We begin with the raw amino-acid sequence, 77 residues long: MAFLKKSLFLVLFLGLVPLSLCESEKREGENEEEQEDDQSEEKRSLGSFLKGVGTTLASVGKVVSDQFGKLLQAGQG.

The signal sequence occupies residues 1–22 (MAFLKKSLFLVLFLGLVPLSLC). A propeptide spanning residues 23–42 (ESEKREGENEEEQEDDQSEE) is cleaved from the precursor. Positions 24 to 45 (SEKREGENEEEQEDDQSEEKRS) are disordered. Over residues 30 to 40 (ENEEEQEDDQS) the composition is skewed to acidic residues. The residue at position 76 (Q76) is a Glutamine amide.

The protein belongs to the frog skin active peptide (FSAP) family. Dermatoxin subfamily. Highest expression in skin and to a lesser extent in brain and intestine.

It is found in the secreted. The protein localises to the target cell membrane. Possesses a potent antimicrobial activity against Gram-positive bacteria B.megaterium, C.glutamicum and S.aureus and mollicutes A.laidlawii and S.melliferum. Less active against Gram-negative bacteria B.cepacia, P.aeruginosa, S.typhimurium and S.meliloti. Probably acts by disturbing membrane functions with its amphipathic structure. This is Dermatoxin-B1 from Phyllomedusa bicolor (Two-colored leaf frog).